Here is a 357-residue protein sequence, read N- to C-terminus: UPF0744 protein C106.03 (357 aa).

Ser-282 is subject to Phosphoserine.

The protein belongs to the UPF0744 family.

It is found in the cytoplasm. The chain is UPF0744 protein C106.03 from Schizosaccharomyces pombe (strain 972 / ATCC 24843) (Fission yeast).